Consider the following 917-residue polypeptide: MGHDLADIKKSFEASLPGYVEKKDPKSILPQPGKRNILITAALPYVNNVPHLGNIIGCVLSADVFARYCNLRGHQTFYVGGTDEYGTATETKALQEGCTPRELCDKYHAIHKGIYEWFGIDFSHFGRTTTDHQTEICQDMFLKLHKNGYTSSQSVDQLYCNQCEKFLADRFVTGTCPMCAYDDARGDQCDGCGKLINAVDLKDAKCHMCKATPEVKQSTHIFLSLDKLQQKTTEHLDRELAKEDNRWSSNAVGITKAWMKLGLDPRCITRDLKWGTAVPLDGFEKKVFYVWFDAPIGYLSITKCVLGDNWTKWWKNPENVELFNFVGKDNVAFHAVMFPCSQLGANDNYTVVNNLCATEYLNYEDTKFSKSRGTGIFGDAAQGTEIPADIWRFYLLYMRPESQDTAFSWDDFVLKVNSELLNNLGNFINRALSFVANSFGGVVPEMNLTNDDAEVLSEIHNECMQWDKQFDGVHLKDAVKTILNVSRLGNQYMQAQTPWVLMKKDEEGKKRAGTIIGVAANIAYHVSVLLYPIMPTISATIREQCGLPALPLFTPFPICYLKAGHKIGQPSPLFQKLDPAQIAEFKAKFGGSQDAQSSAPKTAEKPKQQKKQAPTKDKKGDKKMASTAAFVELEQGAKVISQLIAQNLKKFDQAKALFTRNQLQRLDGENKQLTIDVKTLQHQLIELETAAGIKQVPKPVVSCTPTPTSTPASGIITEAPKKEAPSTPAPSEPKKAKEQKKGKGGAAAAPVDDTIDVGRLDMRVGRIIKCEKHPDADALYVEQIDVGESAPRTVVSGLVRHVPLDQMQNRLVVVLCNLKPAKMRGVESRAMVMCASSPDKVEIMEVPADSKPGTPVVCPPYTHRPDEQLNPKKKIWETVAEDLKVSAEGFAEWKGQPLLIGSESKMTAPTLRGVHVK.

The 'HIGH' region signature appears at 44–54; it reads PYVNNVPHLGN. The 'KMSKS' region motif lies at 367–371; it reads KFSKS. K370 contacts ATP. Disordered regions lie at residues 591-623 and 702-749; these read GSQD…GDKK and SCTP…AAAA. Residues 614 to 623 are compositionally biased toward basic and acidic residues; sequence PTKDKKGDKK. Over residues 702 to 713 the composition is skewed to low complexity; the sequence is SCTPTPTSTPAS. Positions 732–741 are enriched in basic and acidic residues; that stretch reads EPKKAKEQKK. Residues 756 to 857 form the tRNA-binding domain; it reads DVGRLDMRVG…ADSKPGTPVV (102 aa).

This sequence belongs to the class-I aminoacyl-tRNA synthetase family.

It is found in the cytoplasm. The catalysed reaction is tRNA(Met) + L-methionine + ATP = L-methionyl-tRNA(Met) + AMP + diphosphate. This Caenorhabditis elegans protein is Methionine--tRNA ligase, cytoplasmic.